We begin with the raw amino-acid sequence, 197 residues long: Recombination protein RecR (197 aa).

The segment at C56 to C71 adopts a C4-type zinc-finger fold. The region spanning R79–P174 is the Toprim domain.

This sequence belongs to the RecR family.

In terms of biological role, may play a role in DNA repair. It seems to be involved in an RecBC-independent recombinational process of DNA repair. It may act with RecF and RecO. The sequence is that of Recombination protein RecR from Fusobacterium nucleatum subsp. nucleatum (strain ATCC 25586 / DSM 15643 / BCRC 10681 / CIP 101130 / JCM 8532 / KCTC 2640 / LMG 13131 / VPI 4355).